The following is a 197-amino-acid chain: Probable nicotinate-nucleotide adenylyltransferase (197 aa).

Belongs to the NadD family.

The enzyme catalyses nicotinate beta-D-ribonucleotide + ATP + H(+) = deamido-NAD(+) + diphosphate. It functions in the pathway cofactor biosynthesis; NAD(+) biosynthesis; deamido-NAD(+) from nicotinate D-ribonucleotide: step 1/1. In terms of biological role, catalyzes the reversible adenylation of nicotinate mononucleotide (NaMN) to nicotinic acid adenine dinucleotide (NaAD). The polypeptide is Probable nicotinate-nucleotide adenylyltransferase (Bordetella pertussis (strain Tohama I / ATCC BAA-589 / NCTC 13251)).